Consider the following 232-residue polypeptide: Putative quercetin 2,3-dioxygenase PA1210 (232 aa).

His57, His59, His101, and Glu103 together coordinate a divalent metal cation.

Belongs to the pirin family. The cofactor is a divalent metal cation.

It carries out the reaction quercetin + O2 = 2-(3,4-dihydroxybenzoyloxy)-4,6-dihydroxybenzoate + CO. Its pathway is flavonoid metabolism; quercetin degradation. Putative quercetin 2,3-dioxygenase. The polypeptide is Putative quercetin 2,3-dioxygenase PA1210 (Pseudomonas aeruginosa (strain ATCC 15692 / DSM 22644 / CIP 104116 / JCM 14847 / LMG 12228 / 1C / PRS 101 / PAO1)).